Consider the following 540-residue polypeptide: 2-isopropylmalate synthase (540 aa).

Residues 8-273 (VLIFDTTLRD…FFGRDEDSPT (266 aa)) form the Pyruvate carboxyltransferase domain. Mn(2+)-binding residues include Asp-17, His-208, His-210, and Asn-244. Residues 408-540 (QLKLVQVSCG…MAQLDSSPVH (133 aa)) form a regulatory domain region.

This sequence belongs to the alpha-IPM synthase/homocitrate synthase family. LeuA type 1 subfamily. As to quaternary structure, homodimer. Mn(2+) is required as a cofactor.

The protein localises to the cytoplasm. The catalysed reaction is 3-methyl-2-oxobutanoate + acetyl-CoA + H2O = (2S)-2-isopropylmalate + CoA + H(+). Its pathway is amino-acid biosynthesis; L-leucine biosynthesis; L-leucine from 3-methyl-2-oxobutanoate: step 1/4. Its function is as follows. Catalyzes the condensation of the acetyl group of acetyl-CoA with 3-methyl-2-oxobutanoate (2-ketoisovalerate) to form 3-carboxy-3-hydroxy-4-methylpentanoate (2-isopropylmalate). This is 2-isopropylmalate synthase from Synechococcus sp. (strain CC9311).